The chain runs to 1017 residues: Disease resistance protein RML1B (1017 aa).

One can recognise a TIR domain in the interval tyrosine 12–leucine 176. The active site involves glutamate 87. In terms of domain architecture, NB-ARC spans glutamate 191 to aspartate 447. 10 LRR repeats span residues isoleucine 539–lysine 562, proline 583–proline 605, glutamate 606–leucine 628, lysine 629–threonine 652, leucine 654–leucine 675, histidine 676–leucine 698, glutamate 699–tyrosine 724, cysteine 738–proline 760, threonine 761–serine 782, and histidine 784–threonine 809.

It catalyses the reaction NAD(+) + H2O = ADP-D-ribose + nicotinamide + H(+). Its function is as follows. TIR-NB-LRR receptor-like protein that confers resistance to the pathogen Leptosphaeria maculans (blackleg disease). The protein is Disease resistance protein RML1B of Arabidopsis thaliana (Mouse-ear cress).